Reading from the N-terminus, the 417-residue chain is Bifunctional thiamine biosynthesis protein ThiDN (417 aa).

A hydroxymethylpyrimidine/phosphomethylpyrimidine kinase region spans residues 1–235; the sequence is MVILAIGGYD…KSKFGYNSNP (235 aa). Residue glutamine 41 participates in 4-amino-5-hydroxymethyl-2-methylpyrimidine binding. The thiamine-phosphate synthase stretch occupies residues 236–417; sequence TYINKEKVIK…VIQKIYNTLM (182 aa).

The protein in the N-terminal section; belongs to the ThiD family. It in the C-terminal section; belongs to the ThiN family.

The enzyme catalyses 4-amino-5-hydroxymethyl-2-methylpyrimidine + ATP = 4-amino-2-methyl-5-(phosphooxymethyl)pyrimidine + ADP + H(+). It carries out the reaction 4-amino-2-methyl-5-(phosphooxymethyl)pyrimidine + ATP = 4-amino-2-methyl-5-(diphosphooxymethyl)pyrimidine + ADP. It catalyses the reaction 2-[(2R,5Z)-2-carboxy-4-methylthiazol-5(2H)-ylidene]ethyl phosphate + 4-amino-2-methyl-5-(diphosphooxymethyl)pyrimidine + 2 H(+) = thiamine phosphate + CO2 + diphosphate. The catalysed reaction is 2-(2-carboxy-4-methylthiazol-5-yl)ethyl phosphate + 4-amino-2-methyl-5-(diphosphooxymethyl)pyrimidine + 2 H(+) = thiamine phosphate + CO2 + diphosphate. The enzyme catalyses 4-methyl-5-(2-phosphooxyethyl)-thiazole + 4-amino-2-methyl-5-(diphosphooxymethyl)pyrimidine + H(+) = thiamine phosphate + diphosphate. Its pathway is cofactor biosynthesis; thiamine diphosphate biosynthesis; 4-amino-2-methyl-5-diphosphomethylpyrimidine from 5-amino-1-(5-phospho-D-ribosyl)imidazole. It participates in cofactor biosynthesis; thiamine diphosphate biosynthesis; thiamine phosphate from 4-amino-2-methyl-5-diphosphomethylpyrimidine and 4-methyl-5-(2-phosphoethyl)-thiazole: step 1/1. Its function is as follows. Catalyzes the phosphorylation of hydroxymethylpyrimidine phosphate (HMP-P) to HMP-PP, and of HMP to HMP-P. Functionally, condenses 4-methyl-5-(beta-hydroxyethyl)thiazole monophosphate (THZ-P) and 4-amino-5-hydroxymethyl pyrimidine pyrophosphate (HMP-PP) to form thiamine monophosphate (TMP). The sequence is that of Bifunctional thiamine biosynthesis protein ThiDN (thiDN) from Methanocaldococcus jannaschii (strain ATCC 43067 / DSM 2661 / JAL-1 / JCM 10045 / NBRC 100440) (Methanococcus jannaschii).